We begin with the raw amino-acid sequence, 308 residues long: MPAPTGTDHPDITVTDSLGEHDVARARLMVDGAAAADGISPLSEQAVAAIDAAAGSGVRHVISAAGYANISPGRGDEPAMIEAVVDPQLRRRGHGRALLTTAFGEAERAGDARVWAHGDLPGAQALAASMGLVRRRELLQLRRGLGTGAPALPELIVDDSVRLRTYAGSADDAEILRVNNAAFDWHPEQGGWGAEQIAERVGAAWFDPEGLFLAFDAANPERLLGFHWTKQHDTELGEVYIVGVDPAAQGRGLGRLLTLAGLHHLAATGRSEVNLYVEGDNTAALHTYERLGFGRYAIDVAYGRPEGD.

Residue glutamate 44 coordinates 1D-myo-inositol 2-(L-cysteinylamino)-2-deoxy-alpha-D-glucopyranoside. Position 83–85 (83–85 (AVV)) interacts with acetyl-CoA. Residues 161–308 (VRLRTYAGSA…DVAYGRPEGD (148 aa)) form the N-acetyltransferase domain. 1D-myo-inositol 2-(L-cysteinylamino)-2-deoxy-alpha-D-glucopyranoside contacts are provided by glutamate 188, lysine 230, and glutamate 238. Acetyl-CoA is bound by residues 242–244 (VGV) and 249–255 (QGRGLGR). A 1D-myo-inositol 2-(L-cysteinylamino)-2-deoxy-alpha-D-glucopyranoside-binding site is contributed by tyrosine 276. 281-286 (NTAALH) contacts acetyl-CoA.

This sequence belongs to the acetyltransferase family. MshD subfamily. As to quaternary structure, monomer.

It carries out the reaction 1D-myo-inositol 2-(L-cysteinylamino)-2-deoxy-alpha-D-glucopyranoside + acetyl-CoA = mycothiol + CoA + H(+). Functionally, catalyzes the transfer of acetyl from acetyl-CoA to desacetylmycothiol (Cys-GlcN-Ins) to form mycothiol. The sequence is that of Mycothiol acetyltransferase from Gordonia bronchialis (strain ATCC 25592 / DSM 43247 / BCRC 13721 / JCM 3198 / KCTC 3076 / NBRC 16047 / NCTC 10667) (Rhodococcus bronchialis).